Here is a 236-residue protein sequence, read N- to C-terminus: (5-formylfuran-3-yl)methyl phosphate synthase (236 aa).

K27 serves as the catalytic Schiff-base intermediate with substrate. The active-site Proton acceptor is the K85.

This sequence belongs to the MfnB family.

It carries out the reaction 2 D-glyceraldehyde 3-phosphate = 4-(hydroxymethyl)-2-furancarboxaldehyde phosphate + phosphate + 2 H2O. It participates in cofactor biosynthesis; methanofuran biosynthesis. Catalyzes the formation of 4-(hydroxymethyl)-2-furancarboxaldehyde phosphate (4-HFC-P) from two molecules of glyceraldehyde-3-P (GA-3-P). This Methanococcus maripaludis (strain DSM 14266 / JCM 13030 / NBRC 101832 / S2 / LL) protein is (5-formylfuran-3-yl)methyl phosphate synthase.